Reading from the N-terminus, the 233-residue chain is UPF0502 protein YPTS_2082 (233 aa).

It belongs to the UPF0502 family.

The sequence is that of UPF0502 protein YPTS_2082 from Yersinia pseudotuberculosis serotype IB (strain PB1/+).